A 96-amino-acid polypeptide reads, in one-letter code: Large ribosomal subunit protein eL21 (96 aa).

The segment at 1 to 66 (MPSSNGPLEG…FDGQTGTVEG (66 aa)) is disordered.

This sequence belongs to the eukaryotic ribosomal protein eL21 family. Part of the 50S ribosomal subunit. Interacts with protein L18 and binds the 5S rRNA. Has been cross-linked to L18.

In terms of biological role, this is one of 5 proteins that mediate the attachment of the 5S rRNA onto the large ribosomal subunit, stabilizing the orientation of adjacent RNA domains. The sequence is that of Large ribosomal subunit protein eL21 (rpl21e) from Haloarcula marismortui (strain ATCC 43049 / DSM 3752 / JCM 8966 / VKM B-1809) (Halobacterium marismortui).